Here is a 500-residue protein sequence, read N- to C-terminus: MASYVAAIDQGTTSTRCMIFNHSGRVVAVDQVEHRQIFPRAGWVEHDPEEIWSNTRQVCAGALAKADLVTSEIAAVGITNQRETTVVWDRKTGKPVYNAIVWQDTRTDSIVNELAADGGQNRYHRKTGLPLATYFSGTKIRWILDNVDGVRARAEKGELLFGNMDTWVLWNSTGGPDGGLHVTDPTNASRTLLMDLETLDWDTDICAEFGIPTSMLPEIRSSSEVYGHFRERGVFGGLPIAGILGDQQAATFGQACLSPGEAKNTYGTGNFLLLNTGTERVLSENGLLTTVGYKIGGNDTVYCLEGSIAVTGSLVQWLRDNLGLIASAPEIEQLARTVDDNGGAYFVPAFSGLFAPHWRSDARGAIVGLTRFVDRGHLARAVLEATAFQTREVIEAMNADSGVPLKSLKVDGGMVGNELLMQFQADILGVPVIRPVVSETTALGAAYAAGLAVGFWGSEEDIRSNWAKDKQWDPLMPEEKREAEYRQWQKAVTKTFDWVE.

T12 contacts ADP. T12, T13, and S14 together coordinate ATP. T12 is a sn-glycerol 3-phosphate binding site. R16 lines the ADP pocket. Positions 82, 83, 134, and 246 each coordinate sn-glycerol 3-phosphate. Positions 82, 83, 134, 246, and 247 each coordinate glycerol. ADP contacts are provided by T268 and G312. 4 residues coordinate ATP: T268, G312, Q316, and G413. 2 residues coordinate ADP: G413 and N417.

It belongs to the FGGY kinase family.

It carries out the reaction glycerol + ATP = sn-glycerol 3-phosphate + ADP + H(+). The protein operates within polyol metabolism; glycerol degradation via glycerol kinase pathway; sn-glycerol 3-phosphate from glycerol: step 1/1. With respect to regulation, inhibited by fructose 1,6-bisphosphate (FBP). Key enzyme in the regulation of glycerol uptake and metabolism. Catalyzes the phosphorylation of glycerol to yield sn-glycerol 3-phosphate. This chain is Glycerol kinase, found in Saccharopolyspora erythraea (strain ATCC 11635 / DSM 40517 / JCM 4748 / NBRC 13426 / NCIMB 8594 / NRRL 2338).